The chain runs to 443 residues: ATP-dependent protease ATPase subunit HslU (443 aa).

ATP is bound by residues Ile18, 60–65 (GVGKTE), Asp256, Glu321, and Arg393.

This sequence belongs to the ClpX chaperone family. HslU subfamily. In terms of assembly, a double ring-shaped homohexamer of HslV is capped on each side by a ring-shaped HslU homohexamer. The assembly of the HslU/HslV complex is dependent on binding of ATP.

Its subcellular location is the cytoplasm. ATPase subunit of a proteasome-like degradation complex; this subunit has chaperone activity. The binding of ATP and its subsequent hydrolysis by HslU are essential for unfolding of protein substrates subsequently hydrolyzed by HslV. HslU recognizes the N-terminal part of its protein substrates and unfolds these before they are guided to HslV for hydrolysis. In Histophilus somni (strain 2336) (Haemophilus somnus), this protein is ATP-dependent protease ATPase subunit HslU.